The primary structure comprises 237 residues: tRNA1(Val) (adenine(37)-N6)-methyltransferase (237 aa).

It belongs to the methyltransferase superfamily. tRNA (adenine-N(6)-)-methyltransferase family.

The protein resides in the cytoplasm. It carries out the reaction adenosine(37) in tRNA1(Val) + S-adenosyl-L-methionine = N(6)-methyladenosine(37) in tRNA1(Val) + S-adenosyl-L-homocysteine + H(+). In terms of biological role, specifically methylates the adenine in position 37 of tRNA(1)(Val) (anticodon cmo5UAC). This chain is tRNA1(Val) (adenine(37)-N6)-methyltransferase, found in Bacteroides fragilis (strain ATCC 25285 / DSM 2151 / CCUG 4856 / JCM 11019 / LMG 10263 / NCTC 9343 / Onslow / VPI 2553 / EN-2).